Here is a 527-residue protein sequence, read N- to C-terminus: Zinc finger imprinted 2 (527 aa).

The segment covering 1-16 (MYQPEDDNNSDVTSDD) has biased composition (acidic residues). The tract at residues 1–104 (MYQPEDDNNS…SRSQDAESYQ (104 aa)) is disordered. Basic and acidic residues-rich tracts occupy residues 17 to 26 (DMTRNRRESS), 35 to 56 (SGDRDWDRRGRSRDMEPRDRWS), and 80 to 99 (FEMDREDDRDSRAYESRSQD). Positions 176–246 (VTFEDVLVDF…ETDSRHTVIC (71 aa)) constitute a KRAB domain. A disordered region spans residues 247–322 (QGESHDDPLE…GICTSPQSAS (76 aa)). Polar residues predominate over residues 259–275 (QGNQEKLLTPITMNDPK). The span at 297 to 307 (QSKDPLGKDPQ) shows a compositional bias: basic and acidic residues. 5 consecutive C2H2-type zinc fingers follow at residues 328 to 350 (NRCEFCKRTFSTQVALRRHERIH), 356 to 378 (YECKQCAEAFYLMPHLNRHQKTH), 412 to 434 (FECFQCGKAFLQNVHLLQHLKAH), 466 to 488 (CQCCDCGRVFSRNSYLIQHYRTH), and 494 to 516 (YQCQLCGKCFGRPSYLTQHYQLH).

It belongs to the krueppel C2H2-type zinc-finger protein family. As to expression, highest levels of expression in adult testis; modest levels in fetal kidney and brain.

The protein resides in the nucleus. In terms of biological role, may be involved in transcriptional regulation. The chain is Zinc finger imprinted 2 (ZIM2) from Homo sapiens (Human).